Reading from the N-terminus, the 122-residue chain is Large ribosomal subunit protein uL14 (122 aa).

This sequence belongs to the universal ribosomal protein uL14 family. As to quaternary structure, part of the 50S ribosomal subunit. Forms a cluster with proteins L3 and L19. In the 70S ribosome, L14 and L19 interact and together make contacts with the 16S rRNA in bridges B5 and B8.

Its function is as follows. Binds to 23S rRNA. Forms part of two intersubunit bridges in the 70S ribosome. This is Large ribosomal subunit protein uL14 from Lactobacillus acidophilus (strain ATCC 700396 / NCK56 / N2 / NCFM).